A 228-amino-acid polypeptide reads, in one-letter code: Acyl-protein thioesterase 1 (228 aa).

Active-site charge relay system residues include Ser-119, Asp-174, and His-208.

The protein belongs to the AB hydrolase superfamily. AB hydrolase 2 family.

The protein localises to the cytoplasm. It is found in the nucleus. The catalysed reaction is S-hexadecanoyl-L-cysteinyl-[protein] + H2O = L-cysteinyl-[protein] + hexadecanoate + H(+). Functionally, hydrolyzes fatty acids from S-acylated cysteine residues in proteins with a strong preference for palmitoylated G-alpha proteins over other acyl substrates. Mediates the deacylation of G-alpha proteins such as GPA1 in vivo, but has weak or no activity toward palmitoylated Ras proteins. Has weak lysophospholipase activity in vitro; however such activity may not exist in vivo. The protein is Acyl-protein thioesterase 1 of Kluyveromyces lactis (strain ATCC 8585 / CBS 2359 / DSM 70799 / NBRC 1267 / NRRL Y-1140 / WM37) (Yeast).